A 207-amino-acid polypeptide reads, in one-letter code: Proteasome subunit beta 2 (207 aa).

Positions 1 to 10 (MLQLTEKFKG) are cleaved as a propeptide — removed in mature form; by autocatalysis. Thr-11 (nucleophile) is an active-site residue.

Belongs to the peptidase T1B family. As to quaternary structure, the 20S proteasome core is composed of 14 alpha and 14 beta subunits that assemble into four stacked heptameric rings, resulting in a barrel-shaped structure. The two inner rings, each composed of seven catalytic beta subunits, are sandwiched by two outer rings, each composed of seven alpha subunits. The catalytic chamber with the active sites is on the inside of the barrel. Has a gated structure, the ends of the cylinder being occluded by the N-termini of the alpha-subunits. Is capped at one or both ends by the proteasome regulatory ATPase, PAN.

Its subcellular location is the cytoplasm. The enzyme catalyses Cleavage of peptide bonds with very broad specificity.. Its activity is regulated as follows. The formation of the proteasomal ATPase PAN-20S proteasome complex, via the docking of the C-termini of PAN into the intersubunit pockets in the alpha-rings, triggers opening of the gate for substrate entry. Interconversion between the open-gate and close-gate conformations leads to a dynamic regulation of the 20S proteasome proteolysis activity. In terms of biological role, component of the proteasome core, a large protease complex with broad specificity involved in protein degradation. This Pyrococcus abyssi (strain GE5 / Orsay) protein is Proteasome subunit beta 2.